A 131-amino-acid polypeptide reads, in one-letter code: Actin-associated protein FAM107A (131 aa).

Residues Val57 to Lys77 adopt a coiled-coil conformation. A Nuclear localization signal motif is present at residues Arg61–Glu71.

As to quaternary structure, interacts with ACTB. Interacts with COMMD1; this interaction stabilizes COMMD1 in the nucleus. Interacts with MAP1A. Interacts with PRDX1. Interacts with F-actin.

Its subcellular location is the nucleus. It localises to the cytoplasm. The protein resides in the cytoskeleton. The protein localises to the stress fiber. It is found in the cell junction. Its subcellular location is the focal adhesion. It localises to the cell projection. The protein resides in the ruffle membrane. The protein localises to the synapse. Functionally, stress-inducible actin-binding protein that plays a role in synaptic and cognitive functions by modulating actin filamentous (F-actin) dynamics. Mediates polymerization of globular actin to F-actin. Also binds to, stabilizes and bundles F-actin. Involved in synaptic function by regulating neurite outgrowth in an actin-dependent manner and for the acquisition of hippocampus-dependent cognitive function, such as learning and long-term memory. Plays a role in the actin and microtubule cytoskeleton organization; negatively regulates focal adhesion (FA) assembly promoting malignant glial cell migration in an actin-, microtubule- and MAP1A-dependent manner. Also involved in neuroblastoma G1/S phase cell cycle progression and cell proliferation inhibition by stimulating ubiquitination of NF-kappa-B subunit RELA and NF-kappa-B degradation in a COMMD1- and actin-dependent manner. May play a role in tumor development. The chain is Actin-associated protein FAM107A from Rattus norvegicus (Rat).